The following is a 20-amino-acid chain: Truncated non-structural protein of 4.9 kDa (20 aa).

Belongs to the coronaviruses ns4.9 protein family.

The chain is Truncated non-structural protein of 4.9 kDa from Sus scrofa (Pig).